The sequence spans 1021 residues: Caspase recruitment domain-containing protein 10 (1021 aa).

The interval Met1–Glu24 is disordered. Ser18 bears the Phosphoserine mark. Residues Glu23–Glu115 enclose the CARD domain. Residues Thr138 to Gly450 adopt a coiled-coil conformation. Disordered regions lie at residues Glu475 to Ile544, Ser597 to Gly616, and Leu790 to Ala809. Basic and acidic residues-rich tracts occupy residues His495–Asn508 and Arg525–Lys535.

CARD10 and BCL10 bind to each other by CARD-CARD interaction. They both participate in a complex with MALT1, where MALT1 binds to BCL10. Interacts with TMEM43; this interaction is essential for EGFR-mediated NF-kappa-B activation. In terms of tissue distribution, highly expressed in kidney, heart followed by brain, lung, liver, skeletal muscle and testis.

In terms of biological role, scaffold protein that plays an important role in mediating the activation of NF-kappa-B via BCL10 or EGFR. The chain is Caspase recruitment domain-containing protein 10 (Card10) from Mus musculus (Mouse).